We begin with the raw amino-acid sequence, 441 residues long: Proline--tRNA ligase (441 aa).

Belongs to the class-II aminoacyl-tRNA synthetase family. ProS type 2 subfamily. Homodimer.

Its subcellular location is the cytoplasm. It catalyses the reaction tRNA(Pro) + L-proline + ATP = L-prolyl-tRNA(Pro) + AMP + diphosphate. Its function is as follows. Catalyzes the attachment of proline to tRNA(Pro) in a two-step reaction: proline is first activated by ATP to form Pro-AMP and then transferred to the acceptor end of tRNA(Pro). The polypeptide is Proline--tRNA ligase (Bartonella henselae (strain ATCC 49882 / DSM 28221 / CCUG 30454 / Houston 1) (Rochalimaea henselae)).